The chain runs to 337 residues: Biotin synthase (337 aa).

Residues 55–284 enclose the Radical SAM core domain; that stretch reads YFKNTIELCS…KKTILLAGGK (230 aa). [4Fe-4S] cluster is bound by residues cysteine 73, cysteine 77, and cysteine 80. [2Fe-2S] cluster contacts are provided by cysteine 117, cysteine 149, and cysteine 209.

The protein belongs to the radical SAM superfamily. Biotin synthase family. As to quaternary structure, homodimer. The cofactor is [4Fe-4S] cluster. [2Fe-2S] cluster serves as cofactor.

It catalyses the reaction (4R,5S)-dethiobiotin + (sulfur carrier)-SH + 2 reduced [2Fe-2S]-[ferredoxin] + 2 S-adenosyl-L-methionine = (sulfur carrier)-H + biotin + 2 5'-deoxyadenosine + 2 L-methionine + 2 oxidized [2Fe-2S]-[ferredoxin]. It functions in the pathway cofactor biosynthesis; biotin biosynthesis; biotin from 7,8-diaminononanoate: step 2/2. Functionally, catalyzes the conversion of dethiobiotin (DTB) to biotin by the insertion of a sulfur atom into dethiobiotin via a radical-based mechanism. This chain is Biotin synthase, found in Caldicellulosiruptor bescii (strain ATCC BAA-1888 / DSM 6725 / KCTC 15123 / Z-1320) (Anaerocellum thermophilum).